The primary structure comprises 653 residues: Ran-binding protein 9 (653 aa).

Over residues 1-21 the composition is skewed to pro residues; it reads MSGQPPPPPPQQQPPPPPPPA. Residues 1-62 form a disordered region; it reads MSGQPPPPPP…SAAAPFPHGD (62 aa). Positions 22–57 are enriched in low complexity; it reads SAAAPATAPPGLAVGPGPAAGVPVPGLAAGSSAAAP. The region spanning 72–259 is the B30.2/SPRY domain; it reads LQRRLKRLYP…VDANFGQHPF (188 aa). The LisH domain occupies 290 to 322; the sequence is WQTMIQKMVSSYLVHHGYCATAEAFARSTDQTV. Positions 326-332 are interaction with CALB1; it reads LASIKNR. The CTLH domain maps to 328–385; it reads SIKNRQRIQKLVLAGRMGEAIETTQQLYPSLLERNPNLLFTLKVRQFIEMVNGTDSEV. Lys330 is subject to N6-acetyllysine. A disordered region spans residues 386 to 422; the sequence is RCLGGRSPKSQDSYPVSPRPFSSPSMSPSHGMSIHSL. The segment covering 398–421 has biased composition (low complexity); sequence SYPVSPRPFSSPSMSPSHGMSIHS. Residues Ser402 and Ser412 each carry the phosphoserine modification. Residues 539-653 are interaction with FMR1; the sequence is AAIERMIHFG…AFATVEDYLH (115 aa).

It belongs to the RANBP9/10 family. As to quaternary structure, part of a complex consisting of RANBP9, MKLN1 and GID8. Identified in the CTLH complex that contains GID4, RANBP9 and/or RANBP10, MKLN1, MAEA, RMND5A (or alternatively its paralog RMND5B), GID8, ARMC8, WDR26 and YPEL5. Within this complex, MAEA, RMND5A (or alternatively its paralog RMND5B), GID8, WDR26, and RANBP9 and/or RANBP10 form the catalytic core, while GID4, MKLN1, ARMC8 and YPEL5 have ancillary roles. Interacts with GTP-bound Ran, AR, CDC2L1/p110C, CALB1, S100A7, USP11, SOS1 or SOS2, GID8, and FMR1. Interacts with the Dyrk kinases HIPK2, DYRK1A, and DYRK1B. Interacts with TP73 isoform Alpha but not with TP53. Interacts with the HGF receptor MET and the integrins ITGB1 and ITGB2, but not with ITGAL. Part of a complex consisting of RANBP9, RAN, DYRK1B and COPS5. Directly interacts with RANBP10. Interacts with YPEL5. Interacts with MKLN1. Interacts with DDX4. Interacts with NGFR. Interacts with Tex19.1 and, probably, Tex19.2. Post-translationally, phosphorylated in response to stress. In terms of processing, ubiquitinated. Polyubiquitination targets the protein for rapid degradation via the ubiquitin system. In terms of tissue distribution, ubiquitously expressed, with highest levels in maturating spermatocytes.

The protein resides in the cytoplasm. It localises to the cell membrane. It is found in the nucleus. May act as scaffolding protein, and as adapter protein to couple membrane receptors to intracellular signaling pathways. Acts as a mediator of cell spreading and actin cytoskeleton rearrangement. Core component of the CTLH E3 ubiquitin-protein ligase complex that selectively accepts ubiquitin from UBE2H and mediates ubiquitination and subsequent proteasomal degradation of the transcription factor HBP1. May be involved in signaling of ITGB2/LFA-1 and other integrins. Enhances HGF-MET signaling by recruiting Sos and activating the Ras pathway. Enhances dihydrotestosterone-induced transactivation activity of AR, as well as dexamethasone-induced transactivation activity of NR3C1, but not affect estrogen-induced transactivation. Stabilizes TP73 isoform Alpha, probably by inhibiting its ubiquitination, and increases its proapoptotic activity. Inhibits the kinase activity of DYRK1A and DYRK1B. Inhibits FMR1 binding to RNA. In Mus musculus (Mouse), this protein is Ran-binding protein 9.